The sequence spans 149 residues: Large ribosomal subunit protein uL15 (149 aa).

Positions 1 to 11 (MSDPIKLHDLR) are enriched in basic and acidic residues. The disordered stretch occupies residues 1 to 44 (MSDPIKLHDLRPAPGAKKAKTRVGRGEASKGKTAGRGTKGTKAR).

It belongs to the universal ribosomal protein uL15 family. As to quaternary structure, part of the 50S ribosomal subunit.

Functionally, binds to the 23S rRNA. This Corynebacterium jeikeium (strain K411) protein is Large ribosomal subunit protein uL15.